We begin with the raw amino-acid sequence, 543 residues long: Lysosomal cobalamin transport escort protein LMBD1 (543 aa).

Residues 1-12 (MAAAAAGAASAE) lie on the Extracellular side of the membrane. The helical transmembrane segment at 13–33 (LVIGWCIFGLLLLAILAFCWI) threads the bilayer. At 34 to 52 (YVRKYQSQRESEVVSTITA) the chain is on the cytoplasmic side. Residues 53 to 73 (IFSLAIALITSALLPVDIFLV) traverse the membrane as a helical segment. The Extracellular portion of the chain corresponds to 74–102 (SYMKNQNGTFKDWANGNVSRQIEDTVLYG). Residues Asn-80 and Asn-90 are each glycosylated (N-linked (GlcNAc...) asparagine). Residues 103–123 (YYTLYSVILFCVFFWIPFVYF) traverse the membrane as a helical segment. The Cytoplasmic portion of the chain corresponds to 124–146 (YYEEKDDDDTGKCTQVKMALKYT). The helical transmembrane segment at 147–167 (LGFVVICALLLLVGAFVPLNL) threads the bilayer. The Extracellular portion of the chain corresponds to 168–190 (PDNKNSTEWEKVKFLFEELGSSH). An N-linked (GlcNAc...) asparagine glycan is attached at Asn-172. A helical transmembrane segment spans residues 191–211 (GLAALSFSISSLTLVGMLAAI). Topologically, residues 212-307 (IYTAYGMSAL…KFCGALRPLK (96 aa)) are cytoplasmic. The YERL motif; mediates interaction with adapter protein complex 2 and is essential for its function in clathrin-mediated endocytosis of INSR motif lies at 234–237 (YERL). At Thr-240 the chain carries Phosphothreonine. The WTKF motif; mediates interaction with adapter protein complex 2 and is essential for its function in clathrin-mediated endocytosis of INSR motif lies at 296-299 (WTKF). Residues 308–328 (IIWGIFFIFVALLFVISLFLS) form a helical membrane-spanning segment. Topologically, residues 329 to 366 (NLDKALHSAGIDSGFIIFGANLSNPLNMLLPLLQTVFP) are extracellular. Residue Asn-349 is glycosylated (N-linked (GlcNAc...) asparagine). Residues 367–387 (LDYILITIIIMYFIFTSMAGI) form a helical membrane-spanning segment. At 388–410 (RNIGIWFFWIRLYKIRRGRTRPQ) the chain is on the cytoplasmic side. The helical transmembrane segment at 411–431 (ALLFLCMILLLIVLHTSYMIY) threads the bilayer. The Extracellular segment spans residues 432 to 488 (SLAPQYVMYGSQNYLIESNMTYNDHRGNSSLSVPKRCDADAPEDQCTVTRTYLFLHK). N-linked (GlcNAc...) asparagine glycosylation is found at Asn-450 and Asn-459. A helical membrane pass occupies residues 489–509 (FWFFSAAYYFGNWAFLGVFIV). Residues 510-543 (GFIVSCCKGKKSVLERVDEDDSDLSDDEPSLYSV) are Cytoplasmic-facing. Ser-531 and Ser-534 each carry phosphoserine.

Belongs to the LIMR family. LMBRD1 subfamily. Interacts with ABCD4; this interaction induces the translocation of ABCD4 from the endoplasmic reticulum to the lysosome. Interacts with ABCD4 and MMACHC; this interaction ensures the transport of cobalamin from the lysosome to the cytoplasm. Interacts with INSR, adapter protein complex 2 and clathrin heavy chain. Post-translationally, N-glycosylated.

Its subcellular location is the endoplasmic reticulum membrane. The protein resides in the lysosome membrane. It localises to the cell membrane. It is found in the cytoplasmic vesicle. The protein localises to the clathrin-coated vesicle. In terms of biological role, lysosomal membrane chaperone required to export cobalamin (vitamin B12) from the lysosome to the cytosol, allowing its conversion to cofactors. Targets ABCD4 transporter from the endoplasmic reticulum to the lysosome. Then forms a complex with lysosomal ABCD4 and cytoplasmic MMACHC to transport cobalamin across the lysosomal membrane. Acts as an adapter protein which plays an important role in mediating and regulating the internalization of the insulin receptor (INSR). Involved in clathrin-mediated endocytosis of INSR via its interaction with adapter protein complex 2. Essential for the initiation of gastrulation and early formation of mesoderm structures during embryogenesis. The protein is Lysosomal cobalamin transport escort protein LMBD1 (LMBRD1) of Bos taurus (Bovine).